Consider the following 85-residue polypeptide: U4-theraphotoxin-Hhn1g (85 aa).

The first 22 residues, 1-22, serve as a signal peptide directing secretion; that stretch reads MKVTLIAILTCAAVLVLHTTAA. Positions 23 to 48 are excised as a propeptide; that stretch reads EELEAESQLMEVGMPDTELAAVDEER. 3 cysteine pairs are disulfide-bonded: Cys-52–Cys-66, Cys-56–Cys-77, and Cys-71–Cys-82.

Belongs to the neurotoxin 12 (Hwtx-2) family. 02 (Hwtx-2) subfamily. As to expression, expressed by the venom gland.

It is found in the secreted. Postsynaptic neurotoxin. The protein is U4-theraphotoxin-Hhn1g of Cyriopagopus hainanus (Chinese bird spider).